A 389-amino-acid chain; its full sequence is Stilbene synthase 1 (389 aa).

55–58 (KFQR) is a binding site for substrate. Cysteine 164 is a catalytic residue. Substrate-binding positions include leucine 267 and 305–307 (GGR).

It belongs to the thiolase-like superfamily. Chalcone/stilbene synthases family. As to quaternary structure, homodimer.

It is found in the cytoplasm. It catalyses the reaction 4-coumaroyl-CoA + 3 malonyl-CoA + 3 H(+) = trans-resveratrol + 4 CO2 + 4 CoA. Its pathway is phytoalexin biosynthesis; 3,4',5-trihydroxystilbene biosynthesis; 3,4',5-trihydroxystilbene from trans-4-coumarate: step 2/2. The chain is Stilbene synthase 1 from Arachis hypogaea (Peanut).